A 996-amino-acid chain; its full sequence is NACHT, LRR and PYD domains-containing protein 9 (996 aa).

In terms of domain architecture, Pyrin spans 1 to 94 (MAESFFSDFG…WRKARNEIRQ (94 aa)). An NACHT domain is found at 150–469 (PTVVLHGPEG…FYMFTRPKDP (320 aa)). Position 156–163 (156–163 (GPEGIGKT)) interacts with ATP. LRR repeat units lie at residues 748–769 (KLNL…VLCE), 777–798 (ALEA…HLSQ), 805–825 (SLTF…TTLC), 834–855 (NLQE…DIAT), 862–883 (KLKT…QLCK), and 891–914 (KLEN…ASAL).

The protein belongs to the NLRP family. Sensor component of NLRP9 inflammasomes. Inflammasomes are supramolecular complexes that assemble in the cytosol in response to pathogens, such as rotavirus, and play critical roles in innate immunity and inflammation. The core of NLRP9 inflammasomes consists of a signal sensor component (NLRP9), an adapter (ASC/PYCARD), which recruits an effector pro-inflammatory caspase (CASP1). Within the complex, NLRP9 and PYCARD interact via their respective DAPIN/pyrin domains. This interaction initiates speck formation (nucleation) which greatly enhances further addition of soluble PYCARD molecules to the speck in a prion-like polymerization process. Clustered PYCARD nucleates the formation of CASP1 filaments through the interaction of their respective CARD domains, acting as a platform for CASP1 polymerization. CASP1 filament formation increases local enzyme concentration, resulting in trans-autocleavage and activation. Active CASP1 then processes IL1B and IL18 precursors, leading to the release of mature cytokines in the extracellular milieu and inflammatory response. Interacts with DHX9 upon rotavirus infection; this interaction may trigger inflammasome activation and inflammatory response. In terms of tissue distribution, detected exclusively in testis and ovary, and at high level in the oocyte from antral follicles.

It localises to the cytoplasm. It is found in the inflammasome. As the sensor component of the NLRP9 inflammasome, plays a crucial role in innate immunity and inflammation. In response to pathogens, including rotavirus, initiates the formation of the inflammasome polymeric complex, made of NLRP9, PYCARD and CASP1. Recruitment of proCASP1 to the inflammasome promotes its activation and CASP1-catalyzed IL1B and IL18 maturation and release in the extracellular milieu. The active cytokines stimulate inflammatory responses. Inflammasomes can also induce pyroptosis, an inflammatory form of programmed cell death. NLRP9 inflammasome activation may be initiated by DHX9 interaction with viral double-stranded RNA (dsRNA), preferentially to short dsRNA segments. This Bos taurus (Bovine) protein is NACHT, LRR and PYD domains-containing protein 9 (NLRP9).